The sequence spans 308 residues: Glutaminase (308 aa).

Positions 65, 116, 161, 168, 192, 244, and 262 each coordinate substrate.

This sequence belongs to the glutaminase family. As to quaternary structure, homotetramer.

The enzyme catalyses L-glutamine + H2O = L-glutamate + NH4(+). The chain is Glutaminase from Geobacillus kaustophilus (strain HTA426).